The sequence spans 38 residues: Lebetin-2-alpha (38 aa).

The segment at 1-38 (GDNKPPKKGPPNGCFGHKIDRIGSHSGLGCNKVDDNKG) is disordered. Cys14 and Cys30 form a disulfide bridge.

Belongs to the natriuretic peptide family. Expressed by the venom gland.

The protein resides in the secreted. Inhibits platelet aggregation induced by thrombin, collagen and PAF-acether. Human platelet aggregation induced by thrombin is inhibited by synthetic lebetin-1-alpha with (IC(50)=140 nM). In vivo, inhibits collagen-induced thrombocytopenia in rats. Is not toxic upon intravenous injection into mice and rats. Its function is as follows. Inhibits platelet aggregation induced by thrombin, collagen and PAF-acether. Human platelet aggregation induced by thrombin is inhibited by synthetic lebetin-1-beta with (IC(50)=32 nM). In vivo, inhibits collagen-induced thrombocytopenia in rats. Is not toxic upon intravenous injection into mice and rats. Functionally, inhibits platelet aggregation induced by thrombin, collagen and PAF-acether. Human platelet aggregation induced by thrombin is inhibited by synthetic lebetin-1-gamma with (IC(50)=5 nM). In vivo, inhibits collagen-induced thrombocytopenia in rats. Is not toxic upon intravenous injection into mice and rats. In terms of biological role, inhibits platelet aggregation induced by thrombin, collagen and PAF-acether. Human platelet aggregation induced by thrombin is inhibited by synthetic lebetin-1-alpha with (IC(50)=2.5 nM). In vivo, inhibits collagen-induced thrombocytopenia in rats. Is not toxic upon intravenous injection into mice and rats. Inhibits platelet aggregation induced by thrombin, collagen and PAF-acether. Human platelet aggregation induced by thrombin is inhibited by synthetic lebetin-1-alpha with (IC(50)=2.8 nM). In vivo, inhibits collagen-induced thrombocytopenia in rats. Is not toxic upon intravenous injection into mice and rats. The sequence is that of Lebetin-2-alpha from Macrovipera lebetinus (Levantine viper).